A 366-amino-acid chain; its full sequence is Acetylserotonin O-methyltransferase 3 (366 aa).

Residues G209, D232, D253, and K267 each contribute to the S-adenosyl-L-homocysteine site. The active-site Proton acceptor is H271. Residues E302 and E332 contribute to the active site.

Belongs to the class I-like SAM-binding methyltransferase superfamily. Cation-independent O-methyltransferase family. In terms of assembly, homodimer. In terms of tissue distribution, expressed at low levels in roots, shoots, leaves, stems and flowers.

Its subcellular location is the cytoplasm. The enzyme catalyses N-acetylserotonin + S-adenosyl-L-methionine = melatonin + S-adenosyl-L-homocysteine + H(+). It functions in the pathway aromatic compound metabolism; melatonin biosynthesis; melatonin from serotonin: step 1/2. Its function is as follows. Methyltransferase which catalyzes the transfer of a methyl group onto N-acetylserotonin, producing melatonin (N-acetyl-5-methoxytryptamine). This Oryza sativa subsp. japonica (Rice) protein is Acetylserotonin O-methyltransferase 3.